Consider the following 840-residue polypeptide: Heat shock 70 kDa protein 4 (840 aa).

Position 53 is an N6-acetyllysine (K53). Position 76 is a phosphoserine (S76). Residues Y89 and Y336 each carry the phosphotyrosine modification. Residues S393 and S415 each carry the phosphoserine modification. Position 430 is an N6-acetyllysine (K430). Residues 500–575 are disordered; that stretch reads VHKSEENEEP…QAKKAKVKTS (76 aa). The segment covering 514 to 533 has biased composition (basic and acidic residues); it reads QNAKEEEKMQVDQEEPHVEE. T538 carries the phosphothreonine modification. A phosphoserine mark is found at S546 and S647. Y660 carries the post-translational modification Phosphotyrosine. K679 is modified (N6-acetyllysine). Residue S756 is modified to Phosphoserine. At K773 the chain carries N6-methyllysine. Residues 783–840 form a disordered region; the sequence is ISKPKPKVEPPKEEQKNAEQNGPVDGQGDNPGPQAAEQGTDAAVPSDSDKKLPEMDID. Composition is skewed to basic and acidic residues over residues 788–799 and 829–840; these read PKVEPPKEEQKN and DSDKKLPEMDID.

Belongs to the heat shock protein 70 family. Interacts with TJP1/ZO-1.

The protein localises to the cytoplasm. In Pongo abelii (Sumatran orangutan), this protein is Heat shock 70 kDa protein 4 (HSPA4).